A 209-amino-acid chain; its full sequence is Imidazole glycerol phosphate synthase subunit HisH (209 aa).

A Glutamine amidotransferase type-1 domain is found at 1–205; sequence MIAIIDYGMG…KGVVEAWKSS (205 aa). Cysteine 79 serves as the catalytic Nucleophile. Residues histidine 180 and glutamate 182 contribute to the active site.

Heterodimer of HisH and HisF.

It localises to the cytoplasm. The enzyme catalyses 5-[(5-phospho-1-deoxy-D-ribulos-1-ylimino)methylamino]-1-(5-phospho-beta-D-ribosyl)imidazole-4-carboxamide + L-glutamine = D-erythro-1-(imidazol-4-yl)glycerol 3-phosphate + 5-amino-1-(5-phospho-beta-D-ribosyl)imidazole-4-carboxamide + L-glutamate + H(+). The catalysed reaction is L-glutamine + H2O = L-glutamate + NH4(+). Its pathway is amino-acid biosynthesis; L-histidine biosynthesis; L-histidine from 5-phospho-alpha-D-ribose 1-diphosphate: step 5/9. Its function is as follows. IGPS catalyzes the conversion of PRFAR and glutamine to IGP, AICAR and glutamate. The HisH subunit catalyzes the hydrolysis of glutamine to glutamate and ammonia as part of the synthesis of IGP and AICAR. The resulting ammonia molecule is channeled to the active site of HisF. The chain is Imidazole glycerol phosphate synthase subunit HisH from Bacillus mycoides (strain KBAB4) (Bacillus weihenstephanensis).